We begin with the raw amino-acid sequence, 291 residues long: MIIIGGTATNWIDERLSKLLVSRLVKIEHKVFPDGESYIRIPERLMGEDVLVVQSLYPPQDKHLVELFFILETLNDMKANKITVIIPYLAYSRQNRRFKEGEAVSTKTVLNLIKKTGATSLMVVEPHHYEELQYFDGEVKIADPIPDIARVINGKVTNPFVLAPDKGALNRAKRLSQELGCDYSYLEKQRDLTTGEVRVTNLPDLRLDGKEVILVDDIISTGGTMVQASQIAYSKGAKKVIATAVHSLFVENAYDRLINAGIKEIITTNTIPQDTSKVTIVDVSESIARKI.

Residues 34-36 (DGE) and 93-94 (RQ) each bind ATP. Residues His127 and Asp165 each contribute to the Mg(2+) site. Lys188 is an active-site residue. Residues Arg190, Asp216, and 220–224 (STGGT) each bind D-ribose 5-phosphate.

This sequence belongs to the ribose-phosphate pyrophosphokinase family. Class III (archaeal) subfamily. Mg(2+) is required as a cofactor.

Its subcellular location is the cytoplasm. The catalysed reaction is D-ribose 5-phosphate + ATP = 5-phospho-alpha-D-ribose 1-diphosphate + AMP + H(+). It participates in metabolic intermediate biosynthesis; 5-phospho-alpha-D-ribose 1-diphosphate biosynthesis; 5-phospho-alpha-D-ribose 1-diphosphate from D-ribose 5-phosphate (route I): step 1/1. Involved in the biosynthesis of the central metabolite phospho-alpha-D-ribosyl-1-pyrophosphate (PRPP) via the transfer of pyrophosphoryl group from ATP to 1-hydroxyl of ribose-5-phosphate (Rib-5-P). This Sulfolobus acidocaldarius (strain ATCC 33909 / DSM 639 / JCM 8929 / NBRC 15157 / NCIMB 11770) protein is Ribose-phosphate pyrophosphokinase.